We begin with the raw amino-acid sequence, 792 residues long: 5-methyltetrahydropteroyltriglutamate--homocysteine methyltransferase (792 aa).

Residues 16-19 (RELK) and lysine 112 contribute to the 5-methyltetrahydropteroyltri-L-glutamate site. L-homocysteine contacts are provided by residues 432 to 434 (IGS) and glutamate 485. L-methionine contacts are provided by residues 432–434 (IGS) and glutamate 485. 5-methyltetrahydropteroyltri-L-glutamate-binding positions include 516 to 517 (RC) and tryptophan 562. Position 600 (aspartate 600) interacts with L-homocysteine. Aspartate 600 contacts L-methionine. A 5-methyltetrahydropteroyltri-L-glutamate-binding site is contributed by glutamate 606. Histidine 642, cysteine 644, and glutamate 666 together coordinate Zn(2+). Histidine 695 serves as the catalytic Proton donor. Cysteine 727 is a binding site for Zn(2+).

It belongs to the vitamin-B12 independent methionine synthase family. Requires Zn(2+) as cofactor.

It carries out the reaction 5-methyltetrahydropteroyltri-L-glutamate + L-homocysteine = tetrahydropteroyltri-L-glutamate + L-methionine. It participates in amino-acid biosynthesis; L-methionine biosynthesis via de novo pathway; L-methionine from L-homocysteine (MetE route): step 1/1. In terms of biological role, catalyzes the transfer of a methyl group from 5-methyltetrahydrofolate to homocysteine resulting in methionine formation. In Cupriavidus necator (Alcaligenes eutrophus), this protein is 5-methyltetrahydropteroyltriglutamate--homocysteine methyltransferase.